The chain runs to 288 residues: MALFRKKDKYIRITPNNSLKGSVSHNVPEVPDELFAKCPACKHMIYKKDLGLAKICPTCSYNFRISAQERLTLTVDEGSFQELFISIETKDPLRFPGYQEKLQKAKETTGLHEAVLTGKAMVKGQQIALAIMDSHFIMASMGTVVGEKITRLFELAIEENLPVVIFTASGGARMQEGIMSLMQMAKVSAAVKRHSNAGLFYLTILTDPTTGGVTASFAMEGDIILAEPQSLVGFAGRRVIETTVRENLPDDFQKAEFLQDHGFVDAIVKRTELRDKIAHLVAFHGGGQ.

The 255-residue stretch at 34 to 288 (LFAKCPACKH…HLVAFHGGGQ (255 aa)) folds into the CoA carboxyltransferase N-terminal domain. Positions 38, 41, 56, and 59 each coordinate Zn(2+). The C4-type zinc finger occupies 38–59 (CPACKHMIYKKDLGLAKICPTC).

It belongs to the AccD/PCCB family. Acetyl-CoA carboxylase is a heterohexamer composed of biotin carboxyl carrier protein (AccB), biotin carboxylase (AccC) and two subunits each of ACCase subunit alpha (AccA) and ACCase subunit beta (AccD). The cofactor is Zn(2+).

The protein localises to the cytoplasm. The enzyme catalyses N(6)-carboxybiotinyl-L-lysyl-[protein] + acetyl-CoA = N(6)-biotinyl-L-lysyl-[protein] + malonyl-CoA. It functions in the pathway lipid metabolism; malonyl-CoA biosynthesis; malonyl-CoA from acetyl-CoA: step 1/1. In terms of biological role, component of the acetyl coenzyme A carboxylase (ACC) complex. Biotin carboxylase (BC) catalyzes the carboxylation of biotin on its carrier protein (BCCP) and then the CO(2) group is transferred by the transcarboxylase to acetyl-CoA to form malonyl-CoA. This Streptococcus pyogenes serotype M3 (strain ATCC BAA-595 / MGAS315) protein is Acetyl-coenzyme A carboxylase carboxyl transferase subunit beta.